A 284-amino-acid chain; its full sequence is Tryptophan 2,3-dioxygenase (284 aa).

Residues 53–57 (FIVQH), Tyr-115, and Arg-119 contribute to the substrate site. His-242 lines the heme pocket. Residue Thr-256 participates in substrate binding.

Belongs to the tryptophan 2,3-dioxygenase family. As to quaternary structure, homotetramer. Heme serves as cofactor.

It catalyses the reaction L-tryptophan + O2 = N-formyl-L-kynurenine. It functions in the pathway amino-acid degradation; L-tryptophan degradation via kynurenine pathway; L-kynurenine from L-tryptophan: step 1/2. In terms of biological role, heme-dependent dioxygenase that catalyzes the oxidative cleavage of the L-tryptophan (L-Trp) pyrrole ring and converts L-tryptophan to N-formyl-L-kynurenine. Catalyzes the oxidative cleavage of the indole moiety. In Bordetella pertussis (strain Tohama I / ATCC BAA-589 / NCTC 13251), this protein is Tryptophan 2,3-dioxygenase.